Here is a 343-residue protein sequence, read N- to C-terminus: GTPase Obg (343 aa).

The region spanning 1 to 159 (MKFVDSASIF…LQLDMELKLM (159 aa)) is the Obg domain. The disordered stretch occupies residues 121 to 144 (GHGGRGNQHFATSTNQAPRRSEPG). Over residues 129-138 (HFATSTNQAP) the composition is skewed to polar residues. Residues 160-323 (ADVGLVGFPN…LKDELWREVS (164 aa)) form the OBG-type G domain. GTP is bound by residues 166-173 (GFPNAGKS), 191-195 (FTTLV), 213-216 (DIPG), 280-283 (TKMD), and 304-306 (SSV). Residues Ser173 and Thr193 each contribute to the Mg(2+) site. The tract at residues 322-343 (VSMRDRPEESSDPEGEGDGGTP) is disordered. Acidic residues predominate over residues 331-343 (SSDPEGEGDGGTP).

It belongs to the TRAFAC class OBG-HflX-like GTPase superfamily. OBG GTPase family. In terms of assembly, monomer. Mg(2+) serves as cofactor.

The protein localises to the cytoplasm. Functionally, an essential GTPase which binds GTP, GDP and possibly (p)ppGpp with moderate affinity, with high nucleotide exchange rates and a fairly low GTP hydrolysis rate. Plays a role in control of the cell cycle, stress response, ribosome biogenesis and in those bacteria that undergo differentiation, in morphogenesis control. The sequence is that of GTPase Obg from Chlorobium luteolum (strain DSM 273 / BCRC 81028 / 2530) (Pelodictyon luteolum).